A 397-amino-acid chain; its full sequence is Acetate kinase (397 aa).

Asn8 lines the Mg(2+) pocket. Lys15 is an ATP binding site. Substrate is bound at residue Arg89. Catalysis depends on Asp146, which acts as the Proton donor/acceptor. ATP is bound by residues 206 to 210 (HLGNG), 281 to 283 (DLR), and 329 to 333 (GVGEN). Glu382 is a Mg(2+) binding site.

The protein belongs to the acetokinase family. In terms of assembly, homodimer. The cofactor is Mg(2+). It depends on Mn(2+) as a cofactor.

The protein localises to the cytoplasm. It catalyses the reaction acetate + ATP = acetyl phosphate + ADP. Its pathway is metabolic intermediate biosynthesis; acetyl-CoA biosynthesis; acetyl-CoA from acetate: step 1/2. Functionally, catalyzes the formation of acetyl phosphate from acetate and ATP. Can also catalyze the reverse reaction. The chain is Acetate kinase from Bacillus thuringiensis subsp. konkukian (strain 97-27).